Here is a 412-residue protein sequence, read N- to C-terminus: Argininosuccinate synthase (412 aa).

ATP contacts are provided by residues 11-19 (AYSGGLDTS) and Ala37. L-citrulline-binding residues include Tyr88 and Ser93. Residue 116–124 (SHGATGKGN) participates in ATP binding. The L-aspartate site is built by Thr120, Asn124, and Asp125. Asn124 lines the L-citrulline pocket. Positions 128, 181, 190, 271, and 283 each coordinate L-citrulline.

This sequence belongs to the argininosuccinate synthase family. Homotetramer.

The protein resides in the cytoplasm. Its subcellular location is the cytosol. The enzyme catalyses L-citrulline + L-aspartate + ATP = 2-(N(omega)-L-arginino)succinate + AMP + diphosphate + H(+). It functions in the pathway amino-acid biosynthesis; L-arginine biosynthesis; L-arginine from L-ornithine and carbamoyl phosphate: step 2/3. The protein operates within nitrogen metabolism; urea cycle; (N(omega)-L-arginino)succinate from L-aspartate and L-citrulline: step 1/1. One of the enzymes of the urea cycle, the metabolic pathway transforming neurotoxic amonia produced by protein catabolism into inocuous urea in the liver of ureotelic animals. Catalyzes the formation of arginosuccinate from aspartate, citrulline and ATP and together with ASL it is responsible for the biosynthesis of arginine in most body tissues. The sequence is that of Argininosuccinate synthase from Xenopus tropicalis (Western clawed frog).